The primary structure comprises 345 residues: MSKMPKNQNLDIERKQDHIEINLMKNVASTLTSGFESMQFIHNALPEINYDSIDTTSTFLGKSLQAPILISSMTGGTTRAGDINYRLAQAAQKAGIAMGLGSMRVLLTKPDTITTFAVRDVAPDIPLLANIGAVQLNYFVTPKECQYLVDVVKADALILHLNVLQELTQPEGNRNWENLLPKIKELVNYLSVPVIVKEVGYGLSKKVAESLIGVGVKVLDIAGSGGTSWSQVEAYRATNSLQNRIASSFINWGIPTLDSLKMVREVSGDIPIIASGGLKSGIDGAKAIRMGANIFGLAGQFLKAADTSESLLSEEVQLIIEQLKITMLCTGSRTLKDLAKAEIRL.

14–15 (RK) provides a ligand contact to substrate. FMN is bound by residues S71, 72-74 (SMT), S102, and N130. 102–104 (SMR) is a binding site for substrate. Q165 provides a ligand contact to substrate. E166 provides a ligand contact to Mg(2+). Residues K197, T227, 277–279 (GLK), and 298–299 (AG) each bind FMN.

The protein belongs to the IPP isomerase type 2 family. Homooctamer. Dimer of tetramers. The cofactor is FMN. Requires NADPH as cofactor. Mg(2+) is required as a cofactor.

The protein localises to the cytoplasm. The enzyme catalyses isopentenyl diphosphate = dimethylallyl diphosphate. In terms of biological role, involved in the biosynthesis of isoprenoids. Catalyzes the 1,3-allylic rearrangement of the homoallylic substrate isopentenyl (IPP) to its allylic isomer, dimethylallyl diphosphate (DMAPP). The polypeptide is Isopentenyl-diphosphate delta-isomerase (Rickettsia felis (strain ATCC VR-1525 / URRWXCal2) (Rickettsia azadi)).